The primary structure comprises 514 residues: Probable E3 ubiquitin-protein ligase ARI10 (514 aa).

Positions 1–18 are enriched in acidic residues; the sequence is MDYSDDDMIDNESGEENN. Positions 1-26 are disordered; that stretch reads MDYSDDDMIDNESGEENNSDGGGNES. The tract at residues 117 to 322 is TRIAD supradomain; the sequence is VDIQCGICFE…SDHYACNNYV (206 aa). Cys121, Cys124, Cys138, His140, Cys143, Cys146, Cys166, Cys171, Cys210, Cys215, Cys231, Cys233, Cys238, Cys241, His246, Cys251, Cys278, and Cys281 together coordinate Zn(2+). The RING-type 1 zinc finger occupies 121 to 171; that stretch reads CGICFESYTRKEIASVSCGHPYCKTCWTGYITTKIEDGPGCLRVKCPEPSC. The segment at 190–251 adopts an IBR-type zinc-finger fold; that stretch reads DKYYRYFLRS…SEDAHSPVDC (62 aa). The RING-type 2; atypical zinc-finger motif lies at 278 to 308; sequence CPKCKRPIEKSHGCNHMTCSASCGHRFCWIC. Cys291 is a catalytic residue. Zn(2+) is bound by residues Cys296, Cys300, Cys305, Cys308, His315, and Cys318.

The protein belongs to the RBR family. Ariadne subfamily. It depends on Zn(2+) as a cofactor.

It carries out the reaction [E2 ubiquitin-conjugating enzyme]-S-ubiquitinyl-L-cysteine + [acceptor protein]-L-lysine = [E2 ubiquitin-conjugating enzyme]-L-cysteine + [acceptor protein]-N(6)-ubiquitinyl-L-lysine.. It participates in protein modification; protein ubiquitination. Might act as an E3 ubiquitin-protein ligase, or as part of E3 complex, which accepts ubiquitin from specific E2 ubiquitin-conjugating enzymes and then transfers it to substrates. The sequence is that of Probable E3 ubiquitin-protein ligase ARI10 (ARI10) from Arabidopsis thaliana (Mouse-ear cress).